An 86-amino-acid polypeptide reads, in one-letter code: Putative membrane protein insertion efficiency factor (86 aa).

This sequence belongs to the UPF0161 family.

Its subcellular location is the cell inner membrane. In terms of biological role, could be involved in insertion of integral membrane proteins into the membrane. This Pseudomonas aeruginosa (strain LESB58) protein is Putative membrane protein insertion efficiency factor.